We begin with the raw amino-acid sequence, 259 residues long: Ribosome maturation factor RimP (259 aa).

Positions 186–195 (RGKQAERELK) are enriched in basic and acidic residues. The interval 186–259 (RGKQAERELK…RGDTDLSEGD (74 aa)) is disordered. The segment covering 239-248 (KQHRLAAGRS) has biased composition (basic residues).

This sequence belongs to the RimP family.

The protein resides in the cytoplasm. Functionally, required for maturation of 30S ribosomal subunits. This Rhodopseudomonas palustris (strain HaA2) protein is Ribosome maturation factor RimP.